A 347-amino-acid polypeptide reads, in one-letter code: Transcription termination/antitermination protein NusA (347 aa).

Residues 112 to 184 (GEIVAGVIQR…REPLITLSRT (73 aa)) form the S1 motif domain. One can recognise a KH domain in the interval 287–347 (ARAARVVVPD…GVSRGMAHDR (61 aa)). A disordered region spans residues 322–347 (DIRGDAPPPPPGQPEPGVSRGMAHDR).

The protein belongs to the NusA family. As to quaternary structure, monomer. Binds directly to the core enzyme of the DNA-dependent RNA polymerase and to nascent RNA.

It is found in the cytoplasm. Participates in both transcription termination and antitermination. This is Transcription termination/antitermination protein NusA from Mycobacterium bovis (strain ATCC BAA-935 / AF2122/97).